We begin with the raw amino-acid sequence, 189 residues long: Streptothricin acetyltransferase (189 aa).

An N-acetyltransferase domain is found at 44–189 (FALREVPADP…HALYMSMPCP (146 aa)). The segment at 55 to 76 (LVKVFPDDGGSDGEDGAEGEDA) is disordered. Positions 63–75 (GGSDGEDGAEGED) are enriched in acidic residues.

Belongs to the acetyltransferase family. GNAT subfamily.

The catalysed reaction is streptothricin F + acetyl-CoA = N(beta)-acetylstreptothricin F + CoA + H(+). In terms of biological role, involved in resistance to streptothricin, a broad-spectrum antibiotic produced by streptomycetes. Detoxifies streptothricin via acetylation of the beta amino group of the first beta-lysyl moiety of streptothricin. The sequence is that of Streptothricin acetyltransferase from Streptomyces lavendulae.